Consider the following 506-residue polypeptide: AAA-ATPase At4g25835 (506 aa).

The first 20 residues, 1–20, serve as a signal peptide directing secretion; the sequence is MKEYWTSLASLLGVLAFCQS. 244 to 251 is an ATP binding site; the sequence is GPPGTGKS. Residues 462 to 506 form a disordered region; sequence GKSRVQNVSLEEQENRAFDSLYAEENGGEEEEIEDNICKSSDDCS. A compositionally biased stretch (acidic residues) spans 487 to 496; the sequence is NGGEEEEIED. Over residues 497-506 the composition is skewed to basic and acidic residues; sequence NICKSSDDCS.

The protein belongs to the AAA ATPase family. BCS1 subfamily. Mg(2+) is required as a cofactor.

The enzyme catalyses ATP + H2O = ADP + phosphate + H(+). This is AAA-ATPase At4g25835 from Arabidopsis thaliana (Mouse-ear cress).